Reading from the N-terminus, the 147-residue chain is Calcium-regulated heat-stable protein 1 (147 aa).

Residues 1-12 (MSSEPPPPPQPP) are compositionally biased toward pro residues. Residues 1-52 (MSSEPPPPPQPPTHQASVGLLDTPRSRERSPSPLRGNVVPSPLPTRRTRTFS) form a disordered region. Residue serine 2 is modified to N-acetylserine. 3 positions are modified to phosphoserine: serine 30, serine 32, and serine 41. Threonine 45 bears the Phosphothreonine mark. A phosphoserine mark is found at serine 52 and serine 58. Residues 62–129 (VYKGVCKCFC…KLQAVEVVIT (68 aa)) form the CSD domain. 2 positions are modified to phosphoserine: serine 146 and serine 147.

As to quaternary structure, homodimer. Interacts with STYX. In terms of processing, dephosphorylated by calcineurin in a Ca(2+) dependent manner. Can be phosphorylated by DYRK2 (in vitro).

Its subcellular location is the cytoplasm. It is found in the P-body. The protein localises to the cytoplasmic granule. In terms of biological role, binds mRNA and regulates the stability of target mRNA. Binds single-stranded DNA (in vitro). This is Calcium-regulated heat-stable protein 1 (CARHSP1) from Homo sapiens (Human).